The sequence spans 75 residues: Small ribosomal subunit protein bS18 (75 aa).

It belongs to the bacterial ribosomal protein bS18 family. In terms of assembly, part of the 30S ribosomal subunit. Forms a tight heterodimer with protein bS6.

Binds as a heterodimer with protein bS6 to the central domain of the 16S rRNA, where it helps stabilize the platform of the 30S subunit. This chain is Small ribosomal subunit protein bS18, found in Alteromonas mediterranea (strain DSM 17117 / CIP 110805 / LMG 28347 / Deep ecotype).